A 227-amino-acid chain; its full sequence is Cytochrome c oxidase subunit 2 (227 aa).

Residues 1–14 are Mitochondrial intermembrane-facing; that stretch reads MAYPLQLGLQDATS. A helical membrane pass occupies residues 15 to 45; sequence PIMEELMNFHDHTLMIVFLISSLVLYIISLM. At 46–59 the chain is on the mitochondrial matrix side; that stretch reads LTTKLTHTSTMDAQ. Residues 60–87 traverse the membrane as a helical segment; that stretch reads EVETIWTILPAVILIMIALPSLRILYMM. The Mitochondrial intermembrane portion of the chain corresponds to 88–227; sequence DEINNPVLTV…HFENWSASMI (140 aa). The Cu cation site is built by His161, Cys196, Glu198, Cys200, His204, and Met207. A Mg(2+)-binding site is contributed by Glu198.

The protein belongs to the cytochrome c oxidase subunit 2 family. In terms of assembly, component of the cytochrome c oxidase (complex IV, CIV), a multisubunit enzyme composed of 14 subunits. The complex is composed of a catalytic core of 3 subunits MT-CO1, MT-CO2 and MT-CO3, encoded in the mitochondrial DNA, and 11 supernumerary subunits COX4I, COX5A, COX5B, COX6A, COX6B, COX6C, COX7A, COX7B, COX7C, COX8 and NDUFA4, which are encoded in the nuclear genome. The complex exists as a monomer or a dimer and forms supercomplexes (SCs) in the inner mitochondrial membrane with NADH-ubiquinone oxidoreductase (complex I, CI) and ubiquinol-cytochrome c oxidoreductase (cytochrome b-c1 complex, complex III, CIII), resulting in different assemblies (supercomplex SCI(1)III(2)IV(1) and megacomplex MCI(2)III(2)IV(2)). Found in a complex with TMEM177, COA6, COX18, COX20, SCO1 and SCO2. Interacts with TMEM177 in a COX20-dependent manner. Interacts with COX20. Interacts with COX16. Requires Cu cation as cofactor.

Its subcellular location is the mitochondrion inner membrane. The enzyme catalyses 4 Fe(II)-[cytochrome c] + O2 + 8 H(+)(in) = 4 Fe(III)-[cytochrome c] + 2 H2O + 4 H(+)(out). Functionally, component of the cytochrome c oxidase, the last enzyme in the mitochondrial electron transport chain which drives oxidative phosphorylation. The respiratory chain contains 3 multisubunit complexes succinate dehydrogenase (complex II, CII), ubiquinol-cytochrome c oxidoreductase (cytochrome b-c1 complex, complex III, CIII) and cytochrome c oxidase (complex IV, CIV), that cooperate to transfer electrons derived from NADH and succinate to molecular oxygen, creating an electrochemical gradient over the inner membrane that drives transmembrane transport and the ATP synthase. Cytochrome c oxidase is the component of the respiratory chain that catalyzes the reduction of oxygen to water. Electrons originating from reduced cytochrome c in the intermembrane space (IMS) are transferred via the dinuclear copper A center (CU(A)) of subunit 2 and heme A of subunit 1 to the active site in subunit 1, a binuclear center (BNC) formed by heme A3 and copper B (CU(B)). The BNC reduces molecular oxygen to 2 water molecules using 4 electrons from cytochrome c in the IMS and 4 protons from the mitochondrial matrix. This Zelotomys hildegardeae (Hildegarde's broad-headed mouse) protein is Cytochrome c oxidase subunit 2 (MT-CO2).